The chain runs to 250 residues: ATP synthase subunit a (250 aa).

Helical transmembrane passes span 31-51 (SAYMFLSVGVISLLMIGGMAG), 85-105 (FFPLVFSLFMFIAVSNLIGII), 115-135 (LIVTVALALLVFVIVLFYGLY), 144-164 (LFVPSGVPVYILPLVVFIEVI), 194-214 (FVGMLGALGFLGWMGAILPLG), and 217-237 (VAVTALEILVAFLQAYVFTIL).

It belongs to the ATPase A chain family. In terms of assembly, F-type ATPases have 2 components, CF(1) - the catalytic core - and CF(0) - the membrane proton channel. CF(1) has five subunits: alpha(3), beta(3), gamma(1), delta(1), epsilon(1). CF(0) has four main subunits: a, b, b' and c.

The protein localises to the cell inner membrane. Its function is as follows. Key component of the proton channel; it plays a direct role in the translocation of protons across the membrane. In Rhodopseudomonas palustris (strain BisB5), this protein is ATP synthase subunit a.